The following is a 2207-amino-acid chain: DNA polymerase epsilon catalytic subunit A (2207 aa).

Disordered regions lie at residues 1–20 (MPSRKPSKYGNKFRSGAASF), 1201–1233 (SMEKLKSSSPQKASGKRKHPENQTKTSLDPFAS), and 1934–1961 (RPESDDSSTPRLTQIPIGQPEPGQENEE). The Zn(2+) site is built by C2075, C2078, C2113, and C2116. The CysA-type zinc finger occupies 2075–2116 (CSACCLIRDLDLCRDEDVLPERGSGSGPDSATSSRPWCCPFC). [4Fe-4S] cluster contacts are provided by C2147, C2150, C2162, and C2164. Residues 2147 to 2164 (CSKCGTLKISEFMEHCSC) carry the CysB motif motif.

The protein belongs to the DNA polymerase type-B family. As to quaternary structure, heterotetramer. Consists of 4 subunits: pol2, dpb2, dpb3 and dpb4. [4Fe-4S] cluster is required as a cofactor.

The protein resides in the nucleus. It catalyses the reaction DNA(n) + a 2'-deoxyribonucleoside 5'-triphosphate = DNA(n+1) + diphosphate. In terms of biological role, DNA polymerase II participates in chromosomal DNA replication. The sequence is that of DNA polymerase epsilon catalytic subunit A (pol2) from Emericella nidulans (strain FGSC A4 / ATCC 38163 / CBS 112.46 / NRRL 194 / M139) (Aspergillus nidulans).